A 620-amino-acid chain; its full sequence is 1-deoxy-D-xylulose-5-phosphate synthase (620 aa).

Thiamine diphosphate is bound by residues H80 and 121 to 123 (GHS). Mg(2+) is bound at residue D152. Residues 153–154 (GA), N181, Y288, and E370 contribute to the thiamine diphosphate site. N181 contributes to the Mg(2+) binding site.

The protein belongs to the transketolase family. DXPS subfamily. As to quaternary structure, homodimer. Requires Mg(2+) as cofactor. It depends on thiamine diphosphate as a cofactor.

It catalyses the reaction D-glyceraldehyde 3-phosphate + pyruvate + H(+) = 1-deoxy-D-xylulose 5-phosphate + CO2. It functions in the pathway metabolic intermediate biosynthesis; 1-deoxy-D-xylulose 5-phosphate biosynthesis; 1-deoxy-D-xylulose 5-phosphate from D-glyceraldehyde 3-phosphate and pyruvate: step 1/1. In terms of biological role, catalyzes the acyloin condensation reaction between C atoms 2 and 3 of pyruvate and glyceraldehyde 3-phosphate to yield 1-deoxy-D-xylulose-5-phosphate (DXP). In Shigella sonnei (strain Ss046), this protein is 1-deoxy-D-xylulose-5-phosphate synthase.